Consider the following 119-residue polypeptide: Holo-[acyl-carrier-protein] synthase (119 aa).

Residues D5 and E51 each contribute to the Mg(2+) site.

Belongs to the P-Pant transferase superfamily. AcpS family. Mg(2+) serves as cofactor.

The protein localises to the cytoplasm. The catalysed reaction is apo-[ACP] + CoA = holo-[ACP] + adenosine 3',5'-bisphosphate + H(+). Its function is as follows. Transfers the 4'-phosphopantetheine moiety from coenzyme A to a Ser of acyl-carrier-protein. The protein is Holo-[acyl-carrier-protein] synthase of Helicobacter pylori (strain ATCC 700392 / 26695) (Campylobacter pylori).